Reading from the N-terminus, the 617-residue chain is tRNA uridine 5-carboxymethylaminomethyl modification enzyme MnmG (617 aa).

FAD contacts are provided by residues 9–14, Val-120, and Thr-175; that span reads GAGHAG. 267–281 lines the NAD(+) pocket; it reads GPRYCPSIEDKVVRF. Gln-364 is a binding site for FAD.

This sequence belongs to the MnmG family. As to quaternary structure, homodimer. Heterotetramer of two MnmE and two MnmG subunits. FAD serves as cofactor.

The protein localises to the cytoplasm. In terms of biological role, NAD-binding protein involved in the addition of a carboxymethylaminomethyl (cmnm) group at the wobble position (U34) of certain tRNAs, forming tRNA-cmnm(5)s(2)U34. This is tRNA uridine 5-carboxymethylaminomethyl modification enzyme MnmG from Onion yellows phytoplasma (strain OY-M).